Reading from the N-terminus, the 68-residue chain is VTCSPVQLSPCLGPINSGAPSPTTCCQKLREQRPCLCGYLKNPSLRQYVNSPNARKLASNCGVPVPQC.

It belongs to the plant LTP family.

In terms of biological role, plant non-specific lipid-transfer proteins transfer phospholipids as well as galactolipids across membranes. May play a role in wax or cutin deposition in the cell walls of expanding epidermal cells and certain secretory tissues. This is Non-specific lipid-transfer protein 2 from Prunus armeniaca (Apricot).